Here is a 1065-residue protein sequence, read N- to C-terminus: Tubulin glycylase 3C (1065 aa).

Disordered regions lie at residues 1–146, 158–182, 301–326, 341–360, 381–482, and 708–755; these read MSSL…REDK, IREQ…TKSK, STQK…DIAK, EKKR…KEQL, FFVD…GNGS, and NKQK…EKQM. Residues 23–53 show a composition bias toward low complexity; the sequence is QEGNQEDLNNQNDHNLNNNELDSLSSPPSDN. The span at 54–63 shows a compositional bias: acidic residues; that stretch reads YNEEEFEQED. Positions 73-92 are enriched in polar residues; that stretch reads QNASQNNISQTQRISQTQLP. The span at 122–146 shows a compositional bias: basic and acidic residues; it reads LMEKKKKEQEEKEKKELKLKKREDK. Over residues 166–179 the composition is skewed to polar residues; that stretch reads LESQTEQSDHSNVT. Over residues 313-326 the composition is skewed to basic and acidic residues; sequence EGDKEKDDKKDIAK. The span at 385–403 shows a compositional bias: basic and acidic residues; that stretch reads VPEKKPKKEKKKNESKEDN. The span at 404-423 shows a compositional bias: polar residues; the sequence is IQITSPKLNSTKSLSSQITR. The segment covering 424–450 has biased composition (basic and acidic residues); it reads KTNDAKKVEKLPKIKDSNKENHSKERN. Residues 451-479 show a composition bias toward acidic residues; sequence EDNEEGDDGEYECDEGDEGASDGEDEDDG. A TTL domain is found at 633-1009; that stretch reads YFEKDPDIEK…DYGMEKSKKA (377 aa). Basic residues predominate over residues 709 to 721; sequence KQKPKKKKKKSKK. Basic and acidic residues predominate over residues 722–733; that stretch reads DKQQGDTEKKEE. Residues 734-754 show a composition bias toward acidic residues; the sequence is EEGEAEDEEEDEEDEEEEEKQ. Residues 821–824, lysine 834, and aspartate 836 each bind ATP; that span reads QKYI.

It localises to the cell projection. Its subcellular location is the cilium. The protein localises to the cytoplasm. It is found in the cytoskeleton. The protein resides in the cilium axoneme. Its function is as follows. Probable glycylase which modifies tubulin, generating side chains of glycine on the gamma-carboxyl groups of specific glutamate residues within the C-terminal tail of tubulin. The sequence is that of Tubulin glycylase 3C (TTLL3C) from Tetrahymena thermophila (strain SB210).